We begin with the raw amino-acid sequence, 339 residues long: Dihydroorotate dehydrogenase (quinone) (339 aa).

Residues 62-66 and Thr-86 each bind FMN; that span reads AGLDK. Residue Lys-66 coordinates substrate. A substrate-binding site is contributed by 111-115; the sequence is NRMGF. FMN is bound by residues Asn-139 and Asn-172. Asn-172 is a binding site for substrate. Ser-175 functions as the Nucleophile in the catalytic mechanism. Residue Asn-177 coordinates substrate. FMN-binding residues include Lys-217 and Thr-245. 246 to 247 contacts substrate; sequence NT. Residues Gly-268, Gly-297, and 318–319 contribute to the FMN site; that span reads YS.

The protein belongs to the dihydroorotate dehydrogenase family. Type 2 subfamily. As to quaternary structure, monomer. FMN serves as cofactor.

Its subcellular location is the cell membrane. It catalyses the reaction (S)-dihydroorotate + a quinone = orotate + a quinol. It functions in the pathway pyrimidine metabolism; UMP biosynthesis via de novo pathway; orotate from (S)-dihydroorotate (quinone route): step 1/1. Catalyzes the conversion of dihydroorotate to orotate with quinone as electron acceptor. The protein is Dihydroorotate dehydrogenase (quinone) of Shewanella denitrificans (strain OS217 / ATCC BAA-1090 / DSM 15013).